Here is a 327-residue protein sequence, read N- to C-terminus: MAQALEDGNPLPKASNRPAESEAPSDPQIKDNHCLGRYKVQAVRDSANLSQERIFHSALTVSGASWARRRGELRELLGLQGAAPAGWLSEEHLEPAVPGSRRSSGQGSSRVCLEPREHAWILAAAECRFEVLLEMLEAEPSLLMREDPITGYSVLHWLAKHGRHEELILLHDFARRRGLPFDVSAPGSGGLTPLHLAALQGHDMVIKVLVGALGADPSRRDHSGNRPCHYLRPDASLNLRELSGAEEWEIERDRKRENANNNSSRTTTTTTTTSRWLKRTPSASCIKSTGVHYKEASQPVKEKKASSTQEGQGRCLRRYLFPFTQNR.

The disordered stretch occupies residues 1–31 (MAQALEDGNPLPKASNRPAESEAPSDPQIKD). 3 ANK repeats span residues 112 to 141 (CLEP…AEPS), 147 to 162 (DPIT…AKHG), and 186 to 216 (PGSG…LGAD). The segment at 251 to 311 (ERDRKRENAN…EKKASSTQEG (61 aa)) is disordered. Positions 260-275 (NNNSSRTTTTTTTTSR) are enriched in low complexity. The span at 292–305 (HYKEASQPVKEKKA) shows a compositional bias: basic and acidic residues.

Belongs to the SOWAH family.

This is Ankyrin repeat domain-containing protein SOWAHD (Sowahd) from Mus musculus (Mouse).